The sequence spans 306 residues: Ribosomal protein L11 methyltransferase (306 aa).

4 residues coordinate S-adenosyl-L-methionine: threonine 154, glycine 179, aspartate 201, and asparagine 242.

This sequence belongs to the methyltransferase superfamily. PrmA family.

Its subcellular location is the cytoplasm. It carries out the reaction L-lysyl-[protein] + 3 S-adenosyl-L-methionine = N(6),N(6),N(6)-trimethyl-L-lysyl-[protein] + 3 S-adenosyl-L-homocysteine + 3 H(+). Methylates ribosomal protein L11. The chain is Ribosomal protein L11 methyltransferase from Xanthomonas axonopodis pv. citri (strain 306).